The following is a 307-amino-acid chain: Aspartate carbamoyltransferase catalytic subunit (307 aa).

Residues R54 and T55 each coordinate carbamoyl phosphate. K83 contributes to the L-aspartate binding site. Positions 104, 132, and 135 each coordinate carbamoyl phosphate. Residues R165 and R228 each contribute to the L-aspartate site. Residues L267 and P268 each contribute to the carbamoyl phosphate site.

The protein belongs to the aspartate/ornithine carbamoyltransferase superfamily. ATCase family. In terms of assembly, heterododecamer (2C3:3R2) of six catalytic PyrB chains organized as two trimers (C3), and six regulatory PyrI chains organized as three dimers (R2).

It catalyses the reaction carbamoyl phosphate + L-aspartate = N-carbamoyl-L-aspartate + phosphate + H(+). Its pathway is pyrimidine metabolism; UMP biosynthesis via de novo pathway; (S)-dihydroorotate from bicarbonate: step 2/3. In terms of biological role, catalyzes the condensation of carbamoyl phosphate and aspartate to form carbamoyl aspartate and inorganic phosphate, the committed step in the de novo pyrimidine nucleotide biosynthesis pathway. In Clostridium perfringens (strain SM101 / Type A), this protein is Aspartate carbamoyltransferase catalytic subunit.